The following is a 258-amino-acid chain: Trifolitoxin-processing protein TfxF (258 aa).

Its function is as follows. The actions of the proteins TfxB, TfxD and TfxF are implicated in the processing of the inactive trifolitoxin (TfxA) precursor into the active peptide. This chain is Trifolitoxin-processing protein TfxF (tfxF), found in Rhizobium leguminosarum bv. trifolii.